We begin with the raw amino-acid sequence, 240 residues long: Extracellular superoxide dismutase [Cu-Zn] (240 aa).

The signal sequence occupies residues 1 to 18 (MLALLCSCLLLAAGASDA). Disulfide bonds link cysteine 63–cysteine 208 and cysteine 125–cysteine 207. Asparagine 107 is a glycosylation site (N-linked (GlcNAc...) asparagine). Positions 114, 116, and 131 each coordinate Cu cation. Residues histidine 131, histidine 139, histidine 142, and aspartate 145 each coordinate Zn(2+). Histidine 181 contributes to the Cu cation binding site. N-linked (Glc) (glycation) lysine; in vitro glycosylation is found at lysine 229 and lysine 230.

The protein belongs to the Cu-Zn superoxide dismutase family. As to quaternary structure, homotetramer. Directly interacts with ATP7A; this interaction is copper-dependent and is required for SOD3 activity. The cofactor is Cu cation. Zn(2+) serves as cofactor. As to expression, expressed in blood vessels, heart, lung, kidney and placenta. Major SOD isoenzyme in extracellular fluids such as plasma, lymph and synovial fluid.

The protein resides in the secreted. The protein localises to the extracellular space. It is found in the golgi apparatus. Its subcellular location is the trans-Golgi network. It carries out the reaction 2 superoxide + 2 H(+) = H2O2 + O2. In terms of biological role, protect the extracellular space from toxic effect of reactive oxygen intermediates by converting superoxide radicals into hydrogen peroxide and oxygen. This chain is Extracellular superoxide dismutase [Cu-Zn] (SOD3), found in Homo sapiens (Human).